Consider the following 241-residue polypeptide: MSGHSKWNNIQGRKNAQDSKRSKVFQKLAREIFVAAKKGPDPSLNPSLRLVMDKAKAVNMPNDNIKRAIDKASGNTSGENYDEVTYEGYAPGGIAVLVHALTDNKNRTSTNVRVAFNKNGGSLGETGSVSYMFDRKGYLVILREGLTVDEEEFMLEAIEAGADDVEVSEDVFEIFTDPATFSEVKEALQEAGYTFATAELSMFPTVYNEIAENNQTQFDKMLEALEDDDDVQEVYTNAEIN.

The segment covering 1-14 has biased composition (polar residues); sequence MSGHSKWNNIQGRK. The disordered stretch occupies residues 1 to 22; sequence MSGHSKWNNIQGRKNAQDSKRS.

Belongs to the TACO1 family.

Its subcellular location is the cytoplasm. The chain is Probable transcriptional regulatory protein lmo1535 from Listeria monocytogenes serovar 1/2a (strain ATCC BAA-679 / EGD-e).